The chain runs to 157 residues: Peptide methionine sulfoxide reductase MsrA (157 aa).

C10 is an active-site residue.

It belongs to the MsrA Met sulfoxide reductase family.

The enzyme catalyses L-methionyl-[protein] + [thioredoxin]-disulfide + H2O = L-methionyl-(S)-S-oxide-[protein] + [thioredoxin]-dithiol. It carries out the reaction [thioredoxin]-disulfide + L-methionine + H2O = L-methionine (S)-S-oxide + [thioredoxin]-dithiol. Has an important function as a repair enzyme for proteins that have been inactivated by oxidation. Catalyzes the reversible oxidation-reduction of methionine sulfoxide in proteins to methionine. In Clostridium perfringens (strain 13 / Type A), this protein is Peptide methionine sulfoxide reductase MsrA.